A 486-amino-acid chain; its full sequence is Protein nucleotidyltransferase YdiU (486 aa).

ATP-binding residues include G90, G92, R93, K113, D125, G126, R176, and R183. D252 (proton acceptor) is an active-site residue. Mg(2+)-binding residues include N253 and D262. D262 lines the ATP pocket.

Belongs to the SELO family. The cofactor is Mg(2+). Mn(2+) serves as cofactor.

The catalysed reaction is L-seryl-[protein] + ATP = 3-O-(5'-adenylyl)-L-seryl-[protein] + diphosphate. The enzyme catalyses L-threonyl-[protein] + ATP = 3-O-(5'-adenylyl)-L-threonyl-[protein] + diphosphate. It catalyses the reaction L-tyrosyl-[protein] + ATP = O-(5'-adenylyl)-L-tyrosyl-[protein] + diphosphate. It carries out the reaction L-histidyl-[protein] + UTP = N(tele)-(5'-uridylyl)-L-histidyl-[protein] + diphosphate. The catalysed reaction is L-seryl-[protein] + UTP = O-(5'-uridylyl)-L-seryl-[protein] + diphosphate. The enzyme catalyses L-tyrosyl-[protein] + UTP = O-(5'-uridylyl)-L-tyrosyl-[protein] + diphosphate. Its function is as follows. Nucleotidyltransferase involved in the post-translational modification of proteins. It can catalyze the addition of adenosine monophosphate (AMP) or uridine monophosphate (UMP) to a protein, resulting in modifications known as AMPylation and UMPylation. This Pseudomonas entomophila (strain L48) protein is Protein nucleotidyltransferase YdiU.